Here is a 342-residue protein sequence, read N- to C-terminus: Heat-inducible transcription repressor HrcA (342 aa).

Belongs to the HrcA family.

Its function is as follows. Negative regulator of class I heat shock genes (grpE-dnaK-dnaJ and groELS operons). Prevents heat-shock induction of these operons. This is Heat-inducible transcription repressor HrcA from Corynebacterium efficiens (strain DSM 44549 / YS-314 / AJ 12310 / JCM 11189 / NBRC 100395).